The primary structure comprises 295 residues: Ribosomal protein L11 methyltransferase (295 aa).

Threonine 150, glycine 171, aspartate 193, and asparagine 232 together coordinate S-adenosyl-L-methionine.

This sequence belongs to the methyltransferase superfamily. PrmA family.

Its subcellular location is the cytoplasm. The enzyme catalyses L-lysyl-[protein] + 3 S-adenosyl-L-methionine = N(6),N(6),N(6)-trimethyl-L-lysyl-[protein] + 3 S-adenosyl-L-homocysteine + 3 H(+). Methylates ribosomal protein L11. This is Ribosomal protein L11 methyltransferase from Neisseria meningitidis serogroup B (strain ATCC BAA-335 / MC58).